Consider the following 95-residue polypeptide: MSVTADDVRRIARLARIAEPTDRIDTLVGELNGILSWIEQLNEVDVDGVEPMTTPVKFPLPQRADEVTDGNCRDKVLANAPKSDEGFFVVPKSVE.

This sequence belongs to the GatC family. As to quaternary structure, heterotrimer of A, B and C subunits.

It catalyses the reaction L-glutamyl-tRNA(Gln) + L-glutamine + ATP + H2O = L-glutaminyl-tRNA(Gln) + L-glutamate + ADP + phosphate + H(+). It carries out the reaction L-aspartyl-tRNA(Asn) + L-glutamine + ATP + H2O = L-asparaginyl-tRNA(Asn) + L-glutamate + ADP + phosphate + 2 H(+). Allows the formation of correctly charged Asn-tRNA(Asn) or Gln-tRNA(Gln) through the transamidation of misacylated Asp-tRNA(Asn) or Glu-tRNA(Gln) in organisms which lack either or both of asparaginyl-tRNA or glutaminyl-tRNA synthetases. The reaction takes place in the presence of glutamine and ATP through an activated phospho-Asp-tRNA(Asn) or phospho-Glu-tRNA(Gln). This chain is Aspartyl/glutamyl-tRNA(Asn/Gln) amidotransferase subunit C, found in Maricaulis maris (strain MCS10) (Caulobacter maris).